The primary structure comprises 168 residues: Ribosome maturation factor RimM (168 aa).

Positions 97–168 (PNEYYYYELL…RLVVKVPEWI (72 aa)) constitute a PRC barrel domain.

The protein belongs to the RimM family. Binds ribosomal protein uS19.

Its subcellular location is the cytoplasm. Its function is as follows. An accessory protein needed during the final step in the assembly of 30S ribosomal subunit, possibly for assembly of the head region. Essential for efficient processing of 16S rRNA. May be needed both before and after RbfA during the maturation of 16S rRNA. It has affinity for free ribosomal 30S subunits but not for 70S ribosomes. The chain is Ribosome maturation factor RimM from Pseudothermotoga lettingae (strain ATCC BAA-301 / DSM 14385 / NBRC 107922 / TMO) (Thermotoga lettingae).